The primary structure comprises 351 residues: Transcriptional activator POG1 (351 aa).

Positions 1–26 (MKQEPHRQSEEKEKPKGPMAVEREQH) are enriched in basic and acidic residues. The tract at residues 1-56 (MKQEPHRQSEEKEKPKGPMAVEREQHTSLSSGTTVTASTGDESTNSRPVESSQTEK) is disordered. Residues 27–56 (TSLSSGTTVTASTGDESTNSRPVESSQTEK) show a composition bias toward polar residues. 2 positions are modified to phosphoserine: Ser-152 and Ser-168. Disordered regions lie at residues 234–256 (PGMG…TPVM) and 291–351 (QHQL…PPPT). The span at 241–256 (QLPTMSSNSESQTPVM) shows a compositional bias: polar residues. At Ser-314 the chain carries Phosphoserine.

Belongs to the POG1 family. Phosphorylated by CDC28.

The protein localises to the nucleus. Functionally, transcriptional activator which promotes cell cycle recovery with CLN2, after pheromone induced G1 arrest, probably inhibiting the ability of STE20 to activate the pheromone response pathway. Binds the promoters of genes that function in cell cycle regulation, cytoskeletal organization, and spindle assembly. May also be involved in stress-resistance. The protein is Transcriptional activator POG1 (POG1) of Saccharomyces cerevisiae (strain ATCC 204508 / S288c) (Baker's yeast).